The primary structure comprises 321 residues: Cytoskeleton protein RodZ (321 aa).

Residues 1–111 (MNTEATHDQN…LGKRRKKRDG (111 aa)) lie on the Cytoplasmic side of the membrane. The HTH cro/C1-type domain maps to 19 to 71 (LRNAREQLGLSQQAVAERLCLKVSTVRDIEEDKAPSDLASTFLRGYIRSYARL). The segment at residues 30-49 (QQAVAERLCLKVSTVRDIEE) is a DNA-binding region (H-T-H motif). Residues 112–132 (WLMSFTWLVLFVVVGLTGAWW) traverse the membrane as a helical; Signal-anchor for type II membrane protein segment. At 133–321 (WQNHKAQQEE…TINAEPTSAQ (189 aa)) the chain is on the periplasmic side. The disordered stretch occupies residues 167–190 (DTRAAASQDTTPAETAPAAPVDST). Over residues 176 to 190 (TTPAETAPAAPVDST) the composition is skewed to low complexity.

It belongs to the RodZ family.

The protein localises to the cell inner membrane. Cytoskeletal protein that is involved in cell-shape control through regulation of the length of the long axis. The polypeptide is Cytoskeleton protein RodZ (Salmonella arizonae (strain ATCC BAA-731 / CDC346-86 / RSK2980)).